The chain runs to 191 residues: Thymidine kinase (191 aa).

ATP is bound by residues 9-16 (GSMNSGKT) and 85-88 (DESQ). Glutamate 86 (proton acceptor) is an active-site residue. The Zn(2+) site is built by cysteine 143, cysteine 146, cysteine 181, and cysteine 184.

Belongs to the thymidine kinase family. In terms of assembly, homotetramer.

It is found in the cytoplasm. The catalysed reaction is thymidine + ATP = dTMP + ADP + H(+). This Listeria monocytogenes serotype 4b (strain F2365) protein is Thymidine kinase.